A 257-amino-acid polypeptide reads, in one-letter code: 3-deoxy-manno-octulosonate cytidylyltransferase (257 aa).

The protein belongs to the KdsB family.

It localises to the cytoplasm. It catalyses the reaction 3-deoxy-alpha-D-manno-oct-2-ulosonate + CTP = CMP-3-deoxy-beta-D-manno-octulosonate + diphosphate. Its pathway is nucleotide-sugar biosynthesis; CMP-3-deoxy-D-manno-octulosonate biosynthesis; CMP-3-deoxy-D-manno-octulosonate from 3-deoxy-D-manno-octulosonate and CTP: step 1/1. It functions in the pathway bacterial outer membrane biogenesis; lipopolysaccharide biosynthesis. Its function is as follows. Activates KDO (a required 8-carbon sugar) for incorporation into bacterial lipopolysaccharide in Gram-negative bacteria. The chain is 3-deoxy-manno-octulosonate cytidylyltransferase from Chromohalobacter salexigens (strain ATCC BAA-138 / DSM 3043 / CIP 106854 / NCIMB 13768 / 1H11).